A 165-amino-acid chain; its full sequence is Endoribonuclease YbeY (165 aa).

Zn(2+)-binding residues include His131, His135, and His141.

It belongs to the endoribonuclease YbeY family. It depends on Zn(2+) as a cofactor.

It is found in the cytoplasm. In terms of biological role, single strand-specific metallo-endoribonuclease involved in late-stage 70S ribosome quality control and in maturation of the 3' terminus of the 16S rRNA. In Lachnoclostridium phytofermentans (strain ATCC 700394 / DSM 18823 / ISDg) (Clostridium phytofermentans), this protein is Endoribonuclease YbeY.